The primary structure comprises 336 residues: tRNA pseudouridine synthase D (336 aa).

Asp84 (nucleophile) is an active-site residue. The TRUD domain maps to 164 to 298; it reads GVPNYFGEQR…TPSYRWLVGD (135 aa).

This sequence belongs to the pseudouridine synthase TruD family.

The catalysed reaction is uridine(13) in tRNA = pseudouridine(13) in tRNA. Its function is as follows. Responsible for synthesis of pseudouridine from uracil-13 in transfer RNAs. This chain is tRNA pseudouridine synthase D, found in Cellvibrio japonicus (strain Ueda107) (Pseudomonas fluorescens subsp. cellulosa).